The following is a 1300-amino-acid chain: Nephrocystin-3 (1300 aa).

Residues 82–183 (KNNEVASMQK…LQRLQAQGIQ (102 aa)) adopt a coiled-coil conformation. 9 TPR repeats span residues 443-476 (TMED…ICEL), 916-949 (ADLY…RETA), 958-991 (AQSL…SENA), 1000-1033 (AREL…RQKS), 1066-1099 (ARTL…RERV), 1108-1141 (AQSI…RRRA), 1150-1183 (AYTV…RQKS), 1192-1225 (ATAL…YEDS), and 1234-1267 (GETL…KETE). A disordered region spans residues 1268-1288 (TSVLGAKAPSGHSSSGGDTYS). Over residues 1278–1288 (GHSSSGGDTYS) the composition is skewed to polar residues.

It localises to the cell projection. Its subcellular location is the cilium. In terms of biological role, required for normal ciliary development and function. Inhibits disheveled-1-induced canonical Wnt-signaling activity and may also play a role in the control of non-canonical Wnt signaling that regulates planar cell polarity. Probably acts as a molecular switch between different Wnt signaling pathways. Required for proper convergent extension cell movements. In Xenopus laevis (African clawed frog), this protein is Nephrocystin-3 (nphp3).